The primary structure comprises 375 residues: Serpin B5 (375 aa).

N-linked (GlcNAc...) asparagine glycosylation is found at Asn133, Asn298, and Asn361.

This sequence belongs to the serpin family. Ov-serpin subfamily. In terms of assembly, interacts with IRF6.

The protein localises to the secreted. It is found in the extracellular space. In terms of biological role, tumor suppressor. It blocks the growth, invasion, and metastatic properties of mammary tumors. As it does not undergo the S (stressed) to R (relaxed) conformational transition characteristic of active serpins, it exhibits no serine protease inhibitory activity. The polypeptide is Serpin B5 (Serpinb5) (Mus musculus (Mouse)).